A 104-amino-acid chain; its full sequence is Replication restart protein PriB (104 aa).

The region spanning 1-101 (MTNRLELSGV…LHADHIEIIC (101 aa)) is the SSB domain.

The protein belongs to the PriB family. In terms of assembly, homodimer. Interacts with PriA and DnaT. Component of the replication restart primosome. Primosome assembly occurs via a 'hand-off' mechanism. PriA binds to replication forks, subsequently PriB then DnaT bind; DnaT then displaces ssDNA to generate the helicase loading substrate.

Functionally, involved in the restart of stalled replication forks, which reloads the replicative helicase on sites other than the origin of replication; the PriA-PriB pathway is the major replication restart pathway. During primosome assembly it facilitates complex formation between PriA and DnaT on DNA; stabilizes PriA on DNA. Stimulates the DNA unwinding activity of PriA helicase. This is Replication restart protein PriB from Photobacterium profundum (strain SS9).